The primary structure comprises 65 residues: Small ribosomal subunit protein bS21 (65 aa).

Residues 45–65 (GRLKRSRSRRRAQRANEERNS) are disordered. The span at 48–57 (KRSRSRRRAQ) shows a compositional bias: basic residues.

This sequence belongs to the bacterial ribosomal protein bS21 family.

The chain is Small ribosomal subunit protein bS21 from Chlorobium phaeobacteroides (strain DSM 266 / SMG 266 / 2430).